Here is a 318-residue protein sequence, read N- to C-terminus: Homoserine kinase (318 aa).

Residue 97 to 107 coordinates ATP; sequence PIGSGLGSSAC.

Belongs to the GHMP kinase family. Homoserine kinase subfamily.

It localises to the cytoplasm. The enzyme catalyses L-homoserine + ATP = O-phospho-L-homoserine + ADP + H(+). It functions in the pathway amino-acid biosynthesis; L-threonine biosynthesis; L-threonine from L-aspartate: step 4/5. Catalyzes the ATP-dependent phosphorylation of L-homoserine to L-homoserine phosphate. In Vibrio cholerae serotype O1 (strain ATCC 39541 / Classical Ogawa 395 / O395), this protein is Homoserine kinase.